A 444-amino-acid chain; its full sequence is MSEETATSDNDNSYARVRAVVMTRDDSSGGWLPLGGSGLSSVTVFRVPHQEENGCADFFIRGERLRDKMVVLECMLKKDLIYNKVTPTFHHWKIDDKKFGLTFQSPADARAFDRGIRRAIEDISLGCPASKTEAEGGDDDLQTTEEDTSRSLVKDHFFQQETVVTSEPYRSSDIRPLPFEDLNARRVYLQSQVSQIPFSQQGLDIQSRSMEYVQRQISKECGSLKSQTRVPLKSIRHVSFQDEDEIVRINPRDILIRRYADYRHPDMWKNDLERDDTDSSVPFSKQDSKKSDYLYHCGDETKLSSLKDSVVFKTQPPSLKFKSKRRKEDGERSRCVYCQERFNHEENARGKCQDAPDPVKRCIYQVSCMLCAESMLYHCMSDSEGDFSDPCSCDTSDDKFCLRWLALVALSFIVPCMCCYVPLRMCHRCGEACGCCGGKHKAAG.

At Ser-2 the chain carries N-acetylserine. The WH1 domain occupies 6-123 (ATSDNDNSYA…RGIRRAIEDI (118 aa)). The residue at position 225 (Lys-225) is an N6-methyllysine. The KBD domain maps to 234–286 (SIRHVSFQDEDEIVRINPRDILIRRYADYRHPDMWKNDLERDDTDSSVPFSKQ). Ser-239 carries the phosphoserine modification. The tract at residues 268–287 (WKNDLERDDTDSSVPFSKQD) is disordered. A Phosphoserine modification is found at Ser-309. Positions 333–444 (SRCVYCQERF…CCGGKHKAAG (112 aa)) are required for interaction with TESK1. An SPR domain is found at 334 to 442 (RCVYCQERFN…CGCCGGKHKA (109 aa)).

Homodimer and heterodimer. Able to interact with SPRED2 to form heterodimers. Interacts (via C-terminus) with TAOK1/MARKK (via C-terminus); the interaction does not affect TAOK1 kinase activity. Interacts (via C-terminus) with TESK1 (via C-terminus); the interaction inhibits TESK1 kinase activity. Interacts with CAV1. Interacts with RAS. Interacts with palmitoyltransferase ZDHHC17/HIP14; the interaction leads to palmitoylation of SPRED1. Palmitoylated by ZDHHC17/HIP14. In terms of processing, ubiquitinated. Post-translationally, phosphorylated on tyrosine. In terms of tissue distribution, expressed in brain. Weakly expressed in lung, heart, liver, kidney, intestine, spleen, testis, thymus, colon and ovary. Also expressed in embryonic tissues such as heart, lung, liver and brain. Highly expressed in IL3-dependent hematopoietic cell lines (Ba/F3 and MC/9) and bone marrow-derived mast cells (BMMC).

It is found in the cell membrane. The protein localises to the membrane. The protein resides in the caveola. It localises to the nucleus. Functionally, tyrosine kinase substrate that inhibits growth-factor-mediated activation of MAP kinase. Negatively regulates hematopoiesis of bone marrow. Inhibits fibroblast growth factor (FGF)-induced retinal lens fiber differentiation, probably by inhibiting FGF-mediated phosphorylation of ERK1/2. Attenuates actin stress fiber formation via inhibition of TESK1-mediated phosphorylation of cofilin. Inhibits TGFB-induced epithelial-to-mesenchymal transition in lens epithelial cells. This Mus musculus (Mouse) protein is Sprouty-related, EVH1 domain-containing protein 1 (Spred1).